Reading from the N-terminus, the 267-residue chain is Hydroxyethylthiazole kinase (267 aa).

Met42 serves as a coordination point for substrate. 2 residues coordinate ATP: Cys118 and Thr162. A substrate-binding site is contributed by Gly189.

Belongs to the Thz kinase family. The cofactor is Mg(2+).

The catalysed reaction is 5-(2-hydroxyethyl)-4-methylthiazole + ATP = 4-methyl-5-(2-phosphooxyethyl)-thiazole + ADP + H(+). It participates in cofactor biosynthesis; thiamine diphosphate biosynthesis; 4-methyl-5-(2-phosphoethyl)-thiazole from 5-(2-hydroxyethyl)-4-methylthiazole: step 1/1. In terms of biological role, catalyzes the phosphorylation of the hydroxyl group of 4-methyl-5-beta-hydroxyethylthiazole (THZ). This is Hydroxyethylthiazole kinase from Rubrobacter xylanophilus (strain DSM 9941 / JCM 11954 / NBRC 16129 / PRD-1).